A 315-amino-acid polypeptide reads, in one-letter code: 4-hydroxy-3-methylbut-2-enyl diphosphate reductase (315 aa).

Cysteine 18 is a binding site for [4Fe-4S] cluster. (2E)-4-hydroxy-3-methylbut-2-enyl diphosphate contacts are provided by histidine 47 and histidine 80. Histidine 47 and histidine 80 together coordinate dimethylallyl diphosphate. Residues histidine 47 and histidine 80 each contribute to the isopentenyl diphosphate site. Cysteine 102 lines the [4Fe-4S] cluster pocket. Residue histidine 130 participates in (2E)-4-hydroxy-3-methylbut-2-enyl diphosphate binding. Residue histidine 130 participates in dimethylallyl diphosphate binding. Histidine 130 provides a ligand contact to isopentenyl diphosphate. The Proton donor role is filled by glutamate 132. Threonine 171 provides a ligand contact to (2E)-4-hydroxy-3-methylbut-2-enyl diphosphate. Residue cysteine 201 participates in [4Fe-4S] cluster binding. Positions 229, 230, 231, and 274 each coordinate (2E)-4-hydroxy-3-methylbut-2-enyl diphosphate. The dimethylallyl diphosphate site is built by serine 229, serine 230, asparagine 231, and serine 274. The isopentenyl diphosphate site is built by serine 229, serine 230, asparagine 231, and serine 274.

It belongs to the IspH family. [4Fe-4S] cluster is required as a cofactor.

The enzyme catalyses isopentenyl diphosphate + 2 oxidized [2Fe-2S]-[ferredoxin] + H2O = (2E)-4-hydroxy-3-methylbut-2-enyl diphosphate + 2 reduced [2Fe-2S]-[ferredoxin] + 2 H(+). The catalysed reaction is dimethylallyl diphosphate + 2 oxidized [2Fe-2S]-[ferredoxin] + H2O = (2E)-4-hydroxy-3-methylbut-2-enyl diphosphate + 2 reduced [2Fe-2S]-[ferredoxin] + 2 H(+). It functions in the pathway isoprenoid biosynthesis; dimethylallyl diphosphate biosynthesis; dimethylallyl diphosphate from (2E)-4-hydroxy-3-methylbutenyl diphosphate: step 1/1. The protein operates within isoprenoid biosynthesis; isopentenyl diphosphate biosynthesis via DXP pathway; isopentenyl diphosphate from 1-deoxy-D-xylulose 5-phosphate: step 6/6. Catalyzes the conversion of 1-hydroxy-2-methyl-2-(E)-butenyl 4-diphosphate (HMBPP) into a mixture of isopentenyl diphosphate (IPP) and dimethylallyl diphosphate (DMAPP). Acts in the terminal step of the DOXP/MEP pathway for isoprenoid precursor biosynthesis. The polypeptide is 4-hydroxy-3-methylbut-2-enyl diphosphate reductase (Hyphomonas neptunium (strain ATCC 15444)).